The following is a 914-amino-acid chain: Isoleucine--tRNA ligase (914 aa).

Positions 57–67 (PYANGQIHMGH) match the 'HIGH' region motif. E554 is an L-isoleucyl-5'-AMP binding site. A 'KMSKS' region motif is present at residues 595-599 (KMSKS). K598 contributes to the ATP binding site. Zn(2+) contacts are provided by C883, C886, C904, and C907.

It belongs to the class-I aminoacyl-tRNA synthetase family. IleS type 1 subfamily. As to quaternary structure, monomer. Requires Zn(2+) as cofactor.

It localises to the cytoplasm. It carries out the reaction tRNA(Ile) + L-isoleucine + ATP = L-isoleucyl-tRNA(Ile) + AMP + diphosphate. In terms of biological role, catalyzes the attachment of isoleucine to tRNA(Ile). As IleRS can inadvertently accommodate and process structurally similar amino acids such as valine, to avoid such errors it has two additional distinct tRNA(Ile)-dependent editing activities. One activity is designated as 'pretransfer' editing and involves the hydrolysis of activated Val-AMP. The other activity is designated 'posttransfer' editing and involves deacylation of mischarged Val-tRNA(Ile). This Macrococcus caseolyticus (strain JCSC5402) (Macrococcoides caseolyticum) protein is Isoleucine--tRNA ligase.